We begin with the raw amino-acid sequence, 179 residues long: Large ribosomal subunit protein uL6 (179 aa).

The protein belongs to the universal ribosomal protein uL6 family. Part of the 50S ribosomal subunit.

Its function is as follows. This protein binds to the 23S rRNA, and is important in its secondary structure. It is located near the subunit interface in the base of the L7/L12 stalk, and near the tRNA binding site of the peptidyltransferase center. This Gloeothece citriformis (strain PCC 7424) (Cyanothece sp. (strain PCC 7424)) protein is Large ribosomal subunit protein uL6.